Consider the following 552-residue polypeptide: Methyl-coenzyme M reductase II subunit alpha (552 aa).

Glutamine 150 contacts coenzyme F430. Residues arginine 228, 259-260 (KH), and arginine 273 contribute to the coenzyme B site. Coenzyme M contacts are provided by tyrosine 335 and tyrosine 446.

This sequence belongs to the methyl-coenzyme M reductase alpha subunit family. In terms of assembly, MCR is a hexamer of two alpha, two beta, and two gamma chains, forming a dimer of heterotrimers. Coenzyme F430 serves as cofactor.

The enzyme catalyses coenzyme B + methyl-coenzyme M = methane + coenzyme M-coenzyme B heterodisulfide. The protein operates within one-carbon metabolism; methyl-coenzyme M reduction; methane from methyl-coenzyme M: step 1/1. Functionally, component of the methyl-coenzyme M reductase (MCR) I that catalyzes the reductive cleavage of methyl-coenzyme M (CoM-S-CH3 or 2-(methylthio)ethanesulfonate) using coenzyme B (CoB or 7-mercaptoheptanoylthreonine phosphate) as reductant which results in the production of methane and the mixed heterodisulfide of CoB and CoM (CoM-S-S-CoB). This is the final step in methanogenesis. The protein is Methyl-coenzyme M reductase II subunit alpha (mrtA) of Methanocaldococcus jannaschii (strain ATCC 43067 / DSM 2661 / JAL-1 / JCM 10045 / NBRC 100440) (Methanococcus jannaschii).